A 144-amino-acid polypeptide reads, in one-letter code: Transcriptional regulator SlyA (144 aa).

The 134-residue stretch at 2–135 (ESPLGSDLAR…LIKLIAKLEH (134 aa)) folds into the HTH marR-type domain. The H-T-H motif DNA-binding region spans 49 to 72 (QIQLAKAIGIEQPSLVRTLDQLED).

Belongs to the SlyA family. In terms of assembly, homodimer.

Its subcellular location is the cytoplasm. Functionally, transcription regulator that can specifically activate or repress expression of target genes. Required for virulence and survival in the macrophage environment. Probably activates the transcription of ssrB. Independently of ssrB activation, capable of stimulating the expression of virulence genes found on pathogenicity island 2 (SPI2). Probably activates expression of ispA, xseB genes, and of omp operon. This is Transcriptional regulator SlyA from Salmonella typhimurium (strain LT2 / SGSC1412 / ATCC 700720).